An 862-amino-acid polypeptide reads, in one-letter code: Mismatch repair endonuclease PMS2 (862 aa).

ATP contacts are provided by Asn45, Asp70, Glu109, Ala110, and Leu111. 4 stretches are compositionally biased toward basic and acidic residues: residues 391 to 401 (DLEKPMVEKQD), 408 to 444 (TGEE…EPRR), 484 to 495 (PTDRAEVEKDSG), and 528 to 552 (GSQE…VDCH). The disordered stretch occupies residues 391 to 552 (DLEKPMVEKQ…DDSFSDVDCH (162 aa)). The residue at position 573 (Thr573) is a Phosphothreonine. Residues 577-580 (KRFK) carry the Nuclear localization signal motif. A Phosphothreonine modification is found at Thr597.

It belongs to the DNA mismatch repair MutL/HexB family. Heterodimer of PMS2 and MLH1 (MutL alpha); this interaction is required for the stability of both partners. Forms a ternary complex with MutS alpha (MSH2-MSH6) or MutS beta (MSH2-MSH3). Part of the BRCA1-associated genome surveillance complex (BASC), which contains BRCA1, MSH2, MSH6, MLH1, ATM, BLM, PMS2 and the RAD50-MRE11-NBS1 protein complex. This association could be a dynamic process changing throughout the cell cycle and within subnuclear domains. Interacts with MTMR15/FAN1.

The protein resides in the nucleus. The enzyme catalyses ATP + H2O = ADP + phosphate + H(+). Component of the post-replicative DNA mismatch repair system (MMR). Heterodimerizes with MLH1 to form MutL alpha. DNA repair is initiated by MutS alpha (MSH2-MSH6) or MutS beta (MSH2-MSH3) binding to a dsDNA mismatch, then MutL alpha is recruited to the heteroduplex. Assembly of the MutL-MutS-heteroduplex ternary complex in presence of RFC and PCNA is sufficient to activate endonuclease activity of PMS2. It introduces single-strand breaks near the mismatch and thus generates new entry points for the exonuclease EXO1 to degrade the strand containing the mismatch. DNA methylation would prevent cleavage and therefore assure that only the newly mutated DNA strand is going to be corrected. MutL alpha (MLH1-PMS2) interacts physically with the clamp loader subunits of DNA polymerase III, suggesting that it may play a role to recruit the DNA polymerase III to the site of the MMR. Also implicated in DNA damage signaling, a process which induces cell cycle arrest and can lead to apoptosis in case of major DNA damages. Possesses an ATPase activity, but in the absence of gross structural changes, ATP hydrolysis may not be necessary for proficient mismatch repair. The protein is Mismatch repair endonuclease PMS2 of Homo sapiens (Human).